The chain runs to 1312 residues: Bifunctional protein PutA (1312 aa).

Residues 228 to 574 (LSRSLNRIIG…SFVNRIADNT (347 aa)) are proline dehydrogenase. The interval 653–1119 (QPVAEGEMQP…LSSRPQDAVG (467 aa)) is aldehyde dehydrogenase. Catalysis depends on residues glutamate 883 and cysteine 917.

The protein in the N-terminal section; belongs to the proline dehydrogenase family. It in the C-terminal section; belongs to the aldehyde dehydrogenase family. FAD is required as a cofactor.

It catalyses the reaction L-proline + a quinone = (S)-1-pyrroline-5-carboxylate + a quinol + H(+). It carries out the reaction L-glutamate 5-semialdehyde + NAD(+) + H2O = L-glutamate + NADH + 2 H(+). The protein operates within amino-acid degradation; L-proline degradation into L-glutamate; L-glutamate from L-proline: step 1/2. It participates in amino-acid degradation; L-proline degradation into L-glutamate; L-glutamate from L-proline: step 2/2. Its function is as follows. Oxidizes proline to glutamate for use as a carbon and nitrogen source and also function as a transcriptional repressor of the put operon. This Klebsiella aerogenes (Enterobacter aerogenes) protein is Bifunctional protein PutA (putA).